Here is a 670-residue protein sequence, read N- to C-terminus: DEAD-box ATP-dependent RNA helicase 16 (670 aa).

A compositionally biased stretch (low complexity) spans 1-10 (MAAAAAASSM). The tract at residues 1–97 (MAAAAAASSM…EEREVSFDEL (97 aa)) is disordered. Basic and acidic residues-rich tracts occupy residues 18–30 (AATEQEVENHDEA) and 40–49 (NDGHTAHAAE). Positions 92–120 (VSFDELGLDEQLKRALRKKGLDKATPIQR) match the Q motif motif. The 184-residue stretch at 123 to 306 (IPLILEGKDV…KLLLHNPFIL (184 aa)) folds into the Helicase ATP-binding domain. ATP is bound at residue 136-143 (AKTGSGKT). Positions 254–257 (DEAD) match the DEAD box motif. A Helicase C-terminal domain is found at 340-523 (LVLLKLELIQ…PFPLLTKNAV (184 aa)). The segment at 616–670 (DIDKPRRRKRMGFKGGSGRSSDPLKTFSAEGKSRRRGRKERDGEQDRRKRKKVES) is disordered. Residues 654 to 670 (KERDGEQDRRKRKKVES) show a composition bias toward basic and acidic residues.

It belongs to the DEAD box helicase family. DDX56/DBP9 subfamily.

It carries out the reaction ATP + H2O = ADP + phosphate + H(+). The protein is DEAD-box ATP-dependent RNA helicase 16 of Oryza sativa subsp. japonica (Rice).